Here is an 87-residue protein sequence, read N- to C-terminus: Glutaredoxin 1 (87 aa).

The Glutaredoxin domain maps to 1 to 87 (MFTVIFGRPG…WAKENLNLFA (87 aa)). Cys11 and Cys14 are disulfide-bonded.

This sequence belongs to the glutaredoxin family. In terms of assembly, monomer.

In terms of biological role, the disulfide bond functions as an electron carrier in the glutathione-dependent synthesis of deoxyribonucleotides by the enzyme ribonucleotide reductase. In addition, it is also involved in reducing some disulfides in a coupled system with glutathione reductase. In Salmonella typhi, this protein is Glutaredoxin 1 (grxA).